A 147-amino-acid chain; its full sequence is Allograft inflammatory factor 1 (147 aa).

S2 bears the N-acetylserine mark. K11 is subject to N6-acetyllysine. Residue S39 is modified to Phosphoserine. The EF-hand 1 domain occupies 45–80 (SKLEGFKEKYMEFDLNGNGDIDIMSLKRMLEKLGVP). Ca(2+)-binding residues include D58, N60, N62, D64, T100, and D105. The EF-hand 2; degenerate domain occupies 81-115 (KTHLELKKLIGEVSSGSGETFSYPDFLRMMLGKRS). A disordered region spans residues 128-147 (AREKEKPTGPPAKKAISELP).

Homodimer (Potential). Monomer. Interacts with LCP1. Post-translationally, phosphorylated on serine residues. Detected in T-lymphocytes and peripheral blood mononuclear cells.

Its subcellular location is the cytoplasm. The protein localises to the cytoskeleton. The protein resides in the cell projection. It localises to the ruffle membrane. It is found in the phagocytic cup. Functionally, actin-binding protein that enhances membrane ruffling and RAC activation. Enhances the actin-bundling activity of LCP1. Binds calcium. Plays a role in RAC signaling and in phagocytosis. May play a role in macrophage activation and function. Promotes the proliferation of vascular smooth muscle cells and of T-lymphocytes. Enhances lymphocyte migration. Plays a role in vascular inflammation. The sequence is that of Allograft inflammatory factor 1 (AIF1) from Homo sapiens (Human).